Here is a 381-residue protein sequence, read N- to C-terminus: Probable tRNA sulfurtransferase (381 aa).

In terms of domain architecture, THUMP spans 60–168 (REATEVLTRV…EGKAYIFVDK (109 aa)). Residues 186–187 (LL), Lys269, Gly291, and Gln300 contribute to the ATP site.

The protein belongs to the ThiI family.

The protein localises to the cytoplasm. It carries out the reaction [ThiI sulfur-carrier protein]-S-sulfanyl-L-cysteine + a uridine in tRNA + 2 reduced [2Fe-2S]-[ferredoxin] + ATP + H(+) = [ThiI sulfur-carrier protein]-L-cysteine + a 4-thiouridine in tRNA + 2 oxidized [2Fe-2S]-[ferredoxin] + AMP + diphosphate. The enzyme catalyses [ThiS sulfur-carrier protein]-C-terminal Gly-Gly-AMP + S-sulfanyl-L-cysteinyl-[cysteine desulfurase] + AH2 = [ThiS sulfur-carrier protein]-C-terminal-Gly-aminoethanethioate + L-cysteinyl-[cysteine desulfurase] + A + AMP + 2 H(+). Its pathway is cofactor biosynthesis; thiamine diphosphate biosynthesis. In terms of biological role, catalyzes the ATP-dependent transfer of a sulfur to tRNA to produce 4-thiouridine in position 8 of tRNAs, which functions as a near-UV photosensor. Also catalyzes the transfer of sulfur to the sulfur carrier protein ThiS, forming ThiS-thiocarboxylate. This is a step in the synthesis of thiazole, in the thiamine biosynthesis pathway. The sulfur is donated as persulfide by IscS. The polypeptide is Probable tRNA sulfurtransferase (Thermococcus kodakarensis (strain ATCC BAA-918 / JCM 12380 / KOD1) (Pyrococcus kodakaraensis (strain KOD1))).